The chain runs to 267 residues: Alpha-tubulin N-acetyltransferase (267 aa).

Positions methionine 1 to phenylalanine 197 constitute an N-acetyltransferase domain. Residues phenylalanine 131–lysine 144 and serine 167–lysine 176 contribute to the acetyl-CoA site.

The protein belongs to the acetyltransferase ATAT1 family.

It catalyses the reaction L-lysyl-[alpha-tubulin] + acetyl-CoA = N(6)-acetyl-L-lysyl-[alpha-tubulin] + CoA + H(+). Functionally, specifically acetylates 'Lys-40' in alpha-tubulin on the lumenal side of microtubules. Promotes microtubule destabilization and accelerates microtubule dynamics; this activity may be independent of acetylation activity. Acetylates alpha-tubulin with a slow enzymatic rate, due to a catalytic site that is not optimized for acetyl transfer. Enters the microtubule through each end and diffuses quickly throughout the lumen of microtubules. Acetylates only long/old microtubules because of its slow acetylation rate since it does not have time to act on dynamically unstable microtubules before the enzyme is released. The polypeptide is Alpha-tubulin N-acetyltransferase (Schistosoma japonicum (Blood fluke)).